Reading from the N-terminus, the 428-residue chain is 47 kDa outer membrane protein (428 aa).

The first 25 residues, 1–25, serve as a signal peptide directing secretion; the sequence is MAKTSKFTQTLLASALAVVAGSASA.

Belongs to the OmpP1/FadL family.

The protein localises to the cell outer membrane. This Pasteurella multocida (strain Pm70) protein is 47 kDa outer membrane protein.